Here is a 190-residue protein sequence, read N- to C-terminus: Nucleoside triphosphate pyrophosphatase (190 aa).

Residue Asp69 is the Proton acceptor of the active site.

The protein belongs to the Maf family. A divalent metal cation is required as a cofactor.

Its subcellular location is the cytoplasm. It carries out the reaction a ribonucleoside 5'-triphosphate + H2O = a ribonucleoside 5'-phosphate + diphosphate + H(+). It catalyses the reaction a 2'-deoxyribonucleoside 5'-triphosphate + H2O = a 2'-deoxyribonucleoside 5'-phosphate + diphosphate + H(+). Its function is as follows. Nucleoside triphosphate pyrophosphatase. May have a dual role in cell division arrest and in preventing the incorporation of modified nucleotides into cellular nucleic acids. This is Nucleoside triphosphate pyrophosphatase from Helicobacter pylori (strain HPAG1).